Reading from the N-terminus, the 1040-residue chain is Nucleotide-binding oligomerization domain-containing protein 2 (1040 aa).

CARD domains lie at 26–122 (CEMC…LHGC) and 126–218 (HSLH…EAAT). The short motif at 63-77 (WEVLSWEDYEGFHLL) is the ATG16L1-binding motif element. Residues Thr-239, Tyr-252, Thr-253, Gly-302, Ser-303, Gly-304, Lys-305, Ser-306, and Thr-307 each coordinate ADP. The interval 241–274 (DGAETLCLEDIYTENVLEVWADVGMAGPPQKSPA) is required for CARD9 binding. The region spanning 293–618 (DTVLVVGEAG…FFAAFYLALS (326 aa)) is the NACHT domain. 299-306 (GEAGSGKS) provides a ligand contact to ATP. The S-palmitoyl cysteine moiety is linked to residue Cys-395. An ADP-binding site is contributed by His-603. LRR repeat units follow at residues 791 to 812 (RPVA…QLLP), 816 to 839 (VCKA…IECA), 844 to 865 (QLQK…SMAK), 872 to 884 (NFLA…NYIT), 900 to 920 (SLQF…QALA), 928 to 949 (SLRW…ALAL), 956 to 976 (MLEE…CSLA), 984 to 1005 (SLKI…ALLQ), and 1012 to 1032 (TILE…DKLG). Residue Cys-1033 is the site of S-palmitoyl cysteine attachment.

The protein belongs to the NOD1-NOD2 family. Homooligomer: homooligomerizes following muramyl dipeptide (MDP)-binding, promoting RIPK2 recruitment. Interacts (via CARD domain) with RIPK2 (via CARD domain). Following RIPK2 recruitment, RIPK2 homooligomerizes via its CARD domain and forms long filaments named RIPosomes. Interacts (via CARD domain) with ubiquitin; inhibiting interaction with RIPK2. Component of a signaling complex consisting of ARHGEF2, NOD2 and RIPK2. Interacts with ANKRD17 (via N-terminus). Interacts with HSPA1A; the interaction enhances NOD2 stability. Interacts (via both CARD domains) with HSP90; the interaction enhances NOD2 stability. Interacts (via CARD domain) with SOCS3; the interaction promotes NOD2 degradation. Interacts (via CARD domain) with ERBIN; the interaction inhibits activation of NOD2. Interacts with MAPKBP1; the interaction is enhanced in the presence of muramyl dipeptide (MDP) and inhibits NOD2 homooligomerization and activation. Interacts with INAVA; the interaction takes place upon Pattern recognition receptor (PRR) stimulation. Interacts (via NACHT domain) with CARD9. Interacts (via CARD domain) with CASP1; this interaction leads to IL1B processing. Also interacts with CASP4. Interacts with NLRP1; this interaction is enhanced in the presence of muramyl dipeptide (MDP) and leads to increased IL1B release. Interacts with NLRP12; this interaction promotes degradation of NOD2 through the ubiquitin-proteasome pathway. Interacts with ANKHD1, C10orf67, CHMP5, DOCK7, ENTR1, KRT15, LDOC1, PPP1R12C, PPP2R3B, TRIM41 and VIM. Interacts with MAVS; interaction takes place following single-stranded RNA (ssRNA)-binding. Interacts with ATG16L1. Interacts with IRGM; promoting IRGM 'Lys-63'-linked polyubiquitination, which is required for interactions with the core autophagy factors. In terms of processing, palmitoylated by ZDHHC5; palmitoylation is required for proper recruitment to the bacterial entry site and hence for proper signaling upon cognate peptidoglycan detection. Palmitoylation promotes localization to the cell membrane. Palmitoylation protects from SQSTM1/p62-dependent autophagic degradation. Post-translationally, polyubiquitinated by TRIM27, leading to proteasome-mediated degradation. Polyubiquitinated and degraded following muramyl dipeptide (MDP) stimulation, conferring MDP tolerance and preventing septic shock. Degraded via selective autophagy following interaction with IRGM. IRGM promotes NOD2-RIPK2 RIPosome recruitment to autophagosome membranes, promoting their SQSTM1/p62-dependent autophagic degradation. In terms of processing, O-glycosylated by OGT, O-GlcNAcylation increases protein stability. As to expression, expressed in monocytes, macrophages, dendritic cells, hepatocytes, preadipocytes, epithelial cells of oral cavity, lung and intestine, with higher expression in ileal Paneth cells and in intestinal stem cells. In terms of tissue distribution, expressed at higher level in leukocytes.

It is found in the cell membrane. The protein resides in the basolateral cell membrane. Its subcellular location is the cytoplasm. It localises to the mitochondrion. With respect to regulation, ADP-binding promotes an inactive closed conformation. Pattern recognition receptor (PRR) that detects bacterial peptidoglycan fragments and other danger signals and plays an important role in gastrointestinal immunity. Specifically activated by muramyl dipeptide (MDP), a fragment of bacterial peptidoglycan found in every bacterial peptidoglycan type. NOD2 specifically recognizes and binds 6-O-phospho-MDP, the phosphorylated form of MDP, which is generated by NAGK. 6-O-phospho-MDP-binding triggers oligomerization that facilitates the binding and subsequent activation of the proximal adapter receptor-interacting RIPK2. Following recruitment, RIPK2 undergoes 'Met-1'- (linear) and 'Lys-63'-linked polyubiquitination by E3 ubiquitin-protein ligases XIAP, BIRC2, BIRC3 and the LUBAC complex, becoming a scaffolding protein for downstream effectors, triggering activation of the NF-kappa-B and MAP kinases signaling. This in turn leads to the transcriptional activation of hundreds of genes involved in immune response. Its ability to detect bacterial MDP plays a central role in maintaining the equilibrium between intestinal microbiota and host immune responses to control inflammation. An imbalance in this relationship results in dysbiosis, whereby pathogenic bacteria prevail on commensals, causing damage in the intestinal epithelial barrier as well as allowing bacterial invasion and inflammation. Acts as a regulator of appetite by sensing MDP in a subset of brain neurons: microbiota-derived MDP reach the brain, where they bind and activate NOD2 in inhibitory hypothalamic neurons, decreasing neuronal activity, thereby regulating satiety and body temperature. NOD2-dependent MDP-sensing of bacterial cell walls in the intestinal epithelial compartment contributes to sustained postnatal growth upon undernutrition. Also plays a role in antiviral response by acting as a sensor of single-stranded RNA (ssRNA) from viruses: upon ssRNA-binding, interacts with MAVS, leading to activation of interferon regulatory factor-3/IRF3 and expression of type I interferon. Also acts as a regulator of autophagy in dendritic cells via its interaction with ATG16L1, possibly by recruiting ATG16L1 at the site of bacterial entry. NOD2 activation in the small intestine crypt also contributes to intestinal stem cells survival and function: acts by promoting mitophagy via its association with ATG16L1. In addition to its main role in innate immunity, also regulates the adaptive immune system by acting as regulator of helper T-cell and regulatory T-cells (Tregs). Besides recognizing pathogens, also involved in the endoplasmic reticulum stress response: acts by sensing and binding to the cytosolic metabolite sphingosine-1-phosphate generated in response to endoplasmic reticulum stress, initiating an inflammation process that leads to activation of the NF-kappa-B and MAP kinases signaling. May also be involved in NLRP1 activation following activation by MDP, leading to CASP1 activation and IL1B release in macrophages. Functionally, acts as a pattern recognition receptor (PRR); able to activate NF-kappa-B. Its function is as follows. Can activate NF-kappa-B in a muramyl dipeptide (MDP)-independent manner. This Homo sapiens (Human) protein is Nucleotide-binding oligomerization domain-containing protein 2.